The following is a 465-amino-acid chain: UDP-N-acetylmuramoylalanine--D-glutamate ligase (465 aa).

Residue 115–121 coordinates ATP; it reads GTDGKTT.

It belongs to the MurCDEF family.

Its subcellular location is the cytoplasm. The catalysed reaction is UDP-N-acetyl-alpha-D-muramoyl-L-alanine + D-glutamate + ATP = UDP-N-acetyl-alpha-D-muramoyl-L-alanyl-D-glutamate + ADP + phosphate + H(+). Its pathway is cell wall biogenesis; peptidoglycan biosynthesis. In terms of biological role, cell wall formation. Catalyzes the addition of glutamate to the nucleotide precursor UDP-N-acetylmuramoyl-L-alanine (UMA). The protein is UDP-N-acetylmuramoylalanine--D-glutamate ligase of Chlorobaculum tepidum (strain ATCC 49652 / DSM 12025 / NBRC 103806 / TLS) (Chlorobium tepidum).